A 74-amino-acid chain; its full sequence is Exodeoxyribonuclease 7 small subunit (74 aa).

It belongs to the XseB family. Heterooligomer composed of large and small subunits.

Its subcellular location is the cytoplasm. The catalysed reaction is Exonucleolytic cleavage in either 5'- to 3'- or 3'- to 5'-direction to yield nucleoside 5'-phosphates.. Bidirectionally degrades single-stranded DNA into large acid-insoluble oligonucleotides, which are then degraded further into small acid-soluble oligonucleotides. This Clostridium botulinum (strain Eklund 17B / Type B) protein is Exodeoxyribonuclease 7 small subunit.